Here is a 444-residue protein sequence, read N- to C-terminus: CCA-adding enzyme (444 aa).

Ser-57 and Arg-60 together coordinate ATP. CTP is bound by residues Ser-57 and Arg-60. Residues Asp-69, Asp-71, and Asp-124 each coordinate Mg(2+). ATP is bound by residues His-147, Lys-168, and Tyr-177. CTP contacts are provided by His-147, Lys-168, and Tyr-177.

This sequence belongs to the tRNA nucleotidyltransferase/poly(A) polymerase family. Archaeal CCA-adding enzyme subfamily. Homodimer. Mg(2+) serves as cofactor.

It carries out the reaction a tRNA precursor + 2 CTP + ATP = a tRNA with a 3' CCA end + 3 diphosphate. The enzyme catalyses a tRNA with a 3' CCA end + 2 CTP + ATP = a tRNA with a 3' CCACCA end + 3 diphosphate. Catalyzes the addition and repair of the essential 3'-terminal CCA sequence in tRNAs without using a nucleic acid template. Adds these three nucleotides in the order of C, C, and A to the tRNA nucleotide-73, using CTP and ATP as substrates and producing inorganic pyrophosphate. tRNA 3'-terminal CCA addition is required both for tRNA processing and repair. Also involved in tRNA surveillance by mediating tandem CCA addition to generate a CCACCA at the 3' terminus of unstable tRNAs. While stable tRNAs receive only 3'-terminal CCA, unstable tRNAs are marked with CCACCA and rapidly degraded. The protein is CCA-adding enzyme of Methanococcus maripaludis (strain C5 / ATCC BAA-1333).